The sequence spans 78 residues: Large ribosomal subunit protein bL28 (78 aa).

This sequence belongs to the bacterial ribosomal protein bL28 family.

This is Large ribosomal subunit protein bL28 (rpmB) from Xylella fastidiosa (strain 9a5c).